A 501-amino-acid polypeptide reads, in one-letter code: Sensor histidine kinase PdtaS (501 aa).

Positions 4–150 (LGDLLAEHTV…HLETAYRLCA (147 aa)) are GAF. The interval 179-291 (DGFIRLDVDG…TEVKRRDRAL (113 aa)) is PAS-like. The Histidine kinase domain maps to 300 to 495 (EIHHRVKNNL…DVVLRVPVGR (196 aa)). At H303 the chain carries Phosphohistidine; by autocatalysis.

Autophosphorylated.

The protein resides in the cytoplasm. It carries out the reaction ATP + protein L-histidine = ADP + protein N-phospho-L-histidine.. Functionally, member of the two-component regulatory system PdtaR/PdtaS. This two-component system plays an essential role in mycobacterial adaptation to poor nutrient conditions. Nutrient deprivation results in increasing intracellular concentrations of cyclic diguanosine monophosphate (c-di-GMP), which binds to the PdtaS sensor and promotes its autophosphorylation, leading to the activation of the signaling cascade. The phosphate group is then transferred to PdtaR. In addition, the PdtaR/PdtaS two-component system controls copper and nitric oxide (NO) resistance downstream of the intramembrane protease Rip1. This coupled Rip1/PdtaS/PdtaR circuit controls NO resistance and acute lung infection in mice by relieving PdtaR/PdtaS-mediated repression of isonitrile chalkophore biosynthesis. Two signals are required to fully inactivate the PdtaR/PdtaS system and mediate NO resistance: a cytoplasmic inhibitory signal through the PdtaS kinase mediated by direct sensing of NO and the production of PPE1-5', an NO-induced small RNA, to sequester PdtaR. The polypeptide is Sensor histidine kinase PdtaS (pdtaS) (Mycobacterium tuberculosis (strain CDC 1551 / Oshkosh)).